The chain runs to 295 residues: 33 kDa chaperonin (295 aa).

2 disulfides stabilise this stretch: Cys-237-Cys-239 and Cys-270-Cys-273.

This sequence belongs to the HSP33 family. Post-translationally, under oxidizing conditions two disulfide bonds are formed involving the reactive cysteines. Under reducing conditions zinc is bound to the reactive cysteines and the protein is inactive.

It is found in the cytoplasm. Its function is as follows. Redox regulated molecular chaperone. Protects both thermally unfolding and oxidatively damaged proteins from irreversible aggregation. Plays an important role in the bacterial defense system toward oxidative stress. The protein is 33 kDa chaperonin of Symbiobacterium thermophilum (strain DSM 24528 / JCM 14929 / IAM 14863 / T).